The chain runs to 685 residues: Methionine--tRNA ligase (685 aa).

Residues 15-25 (PYANGPIHLGH) carry the 'HIGH' region motif. 4 residues coordinate Zn(2+): cysteine 146, cysteine 149, cysteine 159, and cysteine 162. The short motif at 331-335 (KMSKS) is the 'KMSKS' region element. Residue lysine 334 participates in ATP binding. A tRNA-binding domain is found at 583-685 (DFAKMDLRVA…AGVKAGSRVK (103 aa)).

It belongs to the class-I aminoacyl-tRNA synthetase family. MetG type 1 subfamily. As to quaternary structure, homodimer. Zn(2+) is required as a cofactor.

The protein localises to the cytoplasm. It carries out the reaction tRNA(Met) + L-methionine + ATP = L-methionyl-tRNA(Met) + AMP + diphosphate. In terms of biological role, is required not only for elongation of protein synthesis but also for the initiation of all mRNA translation through initiator tRNA(fMet) aminoacylation. In Actinobacillus succinogenes (strain ATCC 55618 / DSM 22257 / CCUG 43843 / 130Z), this protein is Methionine--tRNA ligase.